Consider the following 451-residue polypeptide: Bifunctional protein GlmU (451 aa).

Residues 1–232 (MTARSSLTIV…EDEVRGINTK (232 aa)) form a pyrophosphorylase region. UDP-N-acetyl-alpha-D-glucosamine-binding positions include 11–14 (LAAG), Lys25, Gln78, and 83–84 (GT). Asp108 serves as a coordination point for Mg(2+). UDP-N-acetyl-alpha-D-glucosamine is bound by residues Gly144, Glu158, Asn173, and Asn230. Asn230 lines the Mg(2+) pocket. The linker stretch occupies residues 233-253 (AQLAEAESVMQARLRKAAMEA). The segment at 254 to 451 (GVTLIAPETV…MKTRGKKPEK (198 aa)) is N-acetyltransferase. UDP-N-acetyl-alpha-D-glucosamine-binding residues include Arg319 and Lys337. His349 serves as the catalytic Proton acceptor. Tyr352 and Asn363 together coordinate UDP-N-acetyl-alpha-D-glucosamine. Acetyl-CoA is bound by residues Ala366, 372 to 373 (NY), Ser409, and Arg426.

The protein in the N-terminal section; belongs to the N-acetylglucosamine-1-phosphate uridyltransferase family. This sequence in the C-terminal section; belongs to the transferase hexapeptide repeat family. In terms of assembly, homotrimer. Mg(2+) is required as a cofactor.

The protein resides in the cytoplasm. It catalyses the reaction alpha-D-glucosamine 1-phosphate + acetyl-CoA = N-acetyl-alpha-D-glucosamine 1-phosphate + CoA + H(+). The catalysed reaction is N-acetyl-alpha-D-glucosamine 1-phosphate + UTP + H(+) = UDP-N-acetyl-alpha-D-glucosamine + diphosphate. The protein operates within nucleotide-sugar biosynthesis; UDP-N-acetyl-alpha-D-glucosamine biosynthesis; N-acetyl-alpha-D-glucosamine 1-phosphate from alpha-D-glucosamine 6-phosphate (route II): step 2/2. Its pathway is nucleotide-sugar biosynthesis; UDP-N-acetyl-alpha-D-glucosamine biosynthesis; UDP-N-acetyl-alpha-D-glucosamine from N-acetyl-alpha-D-glucosamine 1-phosphate: step 1/1. It participates in bacterial outer membrane biogenesis; LPS lipid A biosynthesis. Its function is as follows. Catalyzes the last two sequential reactions in the de novo biosynthetic pathway for UDP-N-acetylglucosamine (UDP-GlcNAc). The C-terminal domain catalyzes the transfer of acetyl group from acetyl coenzyme A to glucosamine-1-phosphate (GlcN-1-P) to produce N-acetylglucosamine-1-phosphate (GlcNAc-1-P), which is converted into UDP-GlcNAc by the transfer of uridine 5-monophosphate (from uridine 5-triphosphate), a reaction catalyzed by the N-terminal domain. The protein is Bifunctional protein GlmU of Bradyrhizobium diazoefficiens (strain JCM 10833 / BCRC 13528 / IAM 13628 / NBRC 14792 / USDA 110).